The following is a 324-amino-acid chain: Endochitinase A2 (324 aa).

The N-terminal stretch at M1–A20 is a signal peptide. The 41-residue stretch at E21 to G61 folds into the Chitin-binding type-1 domain. Intrachain disulfides connect C23/C38, C32/C44, C37/C51, and C55/C59. E133 acts as the Proton donor in catalysis. Disulfide bonds link C151–C170 and C269–C301. Residues S310 to A324 constitute a propeptide, removed in mature form.

Belongs to the glycosyl hydrolase 19 family. Chitinase class I subfamily.

The catalysed reaction is Random endo-hydrolysis of N-acetyl-beta-D-glucosaminide (1-&gt;4)-beta-linkages in chitin and chitodextrins.. In terms of biological role, defense against chitin-containing fungal pathogens. This chain is Endochitinase A2 (CHI2), found in Pisum sativum (Garden pea).